The chain runs to 119 residues: MVLPLPWLSRYHFLRLLLPSWSLAPQGSHGCCSQNPKASMEEQTSSRGNGKMTSPPRGPGTHRTAELARAEELLEQQLELYQALLEGQEGAWEAQALVLKIQKLKEQMRRHQESLGGGA.

The transit peptide at 1-24 (MVLPLPWLSRYHFLRLLLPSWSLA) directs the protein to the mitochondrion. The interval 25-65 (PQGSHGCCSQNPKASMEEQTSSRGNGKMTSPPRGPGTHRTA) is disordered. Over residues 31-52 (CCSQNPKASMEEQTSSRGNGKM) the composition is skewed to polar residues. A coiled-coil region spans residues 62 to 116 (HRTAELARAEELLEQQLELYQALLEGQEGAWEAQALVLKIQKLKEQMRRHQESLG).

Widely expressed. Expressed in adult and fetal liver, kidney and lung. Expressed in fetal brain. Weakly expressed in fetal spleen.

The protein localises to the mitochondrion. This is Mitochondrial coiled-coil domain protein 1 (MCCD1) from Homo sapiens (Human).